Here is a 789-residue protein sequence, read N- to C-terminus: MNEKSIRVLEYGKMIDRLEERCLSAMAKEKARELRPIQSFGEITQLQSETSEAQSILIQRGNIPLGGIHDIKQYLRKTEIGSYLDPKELLLVKDTLRTARNLKSFFKEGDDQTKHPIVSGLIQGLQSFRAIEDRIEICIVSDTEISDHASSTLKNIRRQISSKNDAVRNKLNGIINSSTTQKYLQDAIITMRQDRYVVPVKQEHRGNVPGLIHDQSSSGATLFVEPMAVVQLNNELRELKIKEHIEIERILMEIAEMIAQYATEMRNNQIILTAIDFVFAKGKLSLEMKGVEPLLNVEGNVHIKNGRHPLLNADEVVPTNLWIGETFQTLVITGPNTGGKTVTLKTLGLLSMMAQSGLHVPADYGTRLAIFDQIFADIGDEQSIEQSLSTFSSHMTNIVNIVEEVTSNSLVLFDELGAGTDPTEGAALGMAILNHLREMNVTTVATTHYSELKQYALTNEGVENASVEFDVATLSPTYRLLIGVPGKSNAFEISKKLGLPDGLVQRAKRFLSQDTIHFEDLLQNIEKNRRESEIERQEAKRIRLEAEKFAEGYEDRKQRLEAQRDQILRDAKKEAYRLVKEAKMDSEHIIKGLREMKFELEAKEMNKKMEDAKNQLTGKMNDLSDHHQQILNKKNKKPPKNLKPGDAVRILSLNQVGHVLNEVDPKGEVQVQAGIMKVNMHISNLERVSPEKDIQQSGTGKIMKSKTGDTKSEVDVRGKNLEEAMLEIDKYLDDSYIVGLTQVTIIHGVGTGVLKAGIKQMLKKNKHVRTHREGVYGEGGMGVTIVELK.

Gly334–Thr341 provides a ligand contact to ATP. The interval Pro690–Val714 is disordered. The Smr domain maps to Val714–Lys789.

It belongs to the DNA mismatch repair MutS family. MutS2 subfamily. Homodimer. Binds to stalled ribosomes, contacting rRNA.

In terms of biological role, endonuclease that is involved in the suppression of homologous recombination and thus may have a key role in the control of bacterial genetic diversity. Its function is as follows. Acts as a ribosome collision sensor, splitting the ribosome into its 2 subunits. Detects stalled/collided 70S ribosomes which it binds and splits by an ATP-hydrolysis driven conformational change. Acts upstream of the ribosome quality control system (RQC), a ribosome-associated complex that mediates the extraction of incompletely synthesized nascent chains from stalled ribosomes and their subsequent degradation. Probably generates substrates for RQC. The polypeptide is Endonuclease MutS2 (Alkaliphilus metalliredigens (strain QYMF)).